A 563-amino-acid polypeptide reads, in one-letter code: NAD-dependent malic enzyme (563 aa).

Y101 (proton donor) is an active-site residue. R154 contributes to the NAD(+) binding site. Residue K172 is the Proton acceptor of the active site. Residues E243, D244, and D267 each contribute to the a divalent metal cation site. NAD(+) is bound by residues D267 and N416.

Belongs to the malic enzymes family. As to quaternary structure, homotetramer. Mg(2+) serves as cofactor. Requires Mn(2+) as cofactor.

The enzyme catalyses (S)-malate + NAD(+) = pyruvate + CO2 + NADH. It catalyses the reaction oxaloacetate + H(+) = pyruvate + CO2. This chain is NAD-dependent malic enzyme, found in Pseudomonas syringae pv. tomato (strain ATCC BAA-871 / DC3000).